Reading from the N-terminus, the 120-residue chain is NADH-ubiquinone oxidoreductase chain 3 (120 aa).

3 helical membrane passes run 8 to 28, 63 to 83, and 90 to 110; these read YFIL…ISLL, FYLV…LFPW, and ISYF…IGFI.

Belongs to the complex I subunit 3 family.

It localises to the mitochondrion membrane. The enzyme catalyses a ubiquinone + NADH + 5 H(+)(in) = a ubiquinol + NAD(+) + 4 H(+)(out). Its function is as follows. Core subunit of the mitochondrial membrane respiratory chain NADH dehydrogenase (Complex I) that is believed to belong to the minimal assembly required for catalysis. Complex I functions in the transfer of electrons from NADH to the respiratory chain. The immediate electron acceptor for the enzyme is believed to be ubiquinone. The sequence is that of NADH-ubiquinone oxidoreductase chain 3 (ND3) from Cyanidium caldarium (Red alga).